Reading from the N-terminus, the 529-residue chain is CTP synthase (529 aa).

The amidoligase domain stretch occupies residues 1–266 (MTKYIIVTGG…TKKIFNKLGL (266 aa)). Residue Ser-13 coordinates CTP. UTP is bound at residue Ser-13. 14-19 (SVGKGT) is an ATP binding site. Tyr-54 contributes to the L-glutamine binding site. Asp-71 serves as a coordination point for ATP. Asp-71 and Glu-141 together coordinate Mg(2+). Residues 148-150 (DIE), 187-192 (KTKPLQ), and Lys-223 each bind CTP. Residues 187–192 (KTKPLQ) and Lys-223 contribute to the UTP site. The 239-residue stretch at 291–529 (KIALVGKYTK…FLNFLSVASA (239 aa)) folds into the Glutamine amidotransferase type-1 domain. Residue Gly-354 participates in L-glutamine binding. The Nucleophile; for glutamine hydrolysis role is filled by Cys-381. L-glutamine-binding positions include 382–385 (FGMQ), Glu-405, and Arg-462. Residues His-506 and Glu-508 contribute to the active site.

This sequence belongs to the CTP synthase family. Homotetramer.

It carries out the reaction UTP + L-glutamine + ATP + H2O = CTP + L-glutamate + ADP + phosphate + 2 H(+). It catalyses the reaction L-glutamine + H2O = L-glutamate + NH4(+). The catalysed reaction is UTP + NH4(+) + ATP = CTP + ADP + phosphate + 2 H(+). It participates in pyrimidine metabolism; CTP biosynthesis via de novo pathway; CTP from UDP: step 2/2. With respect to regulation, allosterically activated by GTP, when glutamine is the substrate; GTP has no effect on the reaction when ammonia is the substrate. The allosteric effector GTP functions by stabilizing the protein conformation that binds the tetrahedral intermediate(s) formed during glutamine hydrolysis. Inhibited by the product CTP, via allosteric rather than competitive inhibition. Its function is as follows. Catalyzes the ATP-dependent amination of UTP to CTP with either L-glutamine or ammonia as the source of nitrogen. Regulates intracellular CTP levels through interactions with the four ribonucleotide triphosphates. The polypeptide is CTP synthase (Sulfolobus acidocaldarius (strain ATCC 33909 / DSM 639 / JCM 8929 / NBRC 15157 / NCIMB 11770)).